A 79-amino-acid chain; its full sequence is Small serum protein 3 (79 aa).

Residues 1-19 form the signal peptide; it reads MKVFFILIIFSFTLATCQG. 3 disulfides stabilise this stretch: Cys-21–Cys-72, Cys-39–Cys-64, and Cys-62–Cys-71.

The protein localises to the secreted. Shows an slight inhibitory effect toward the metalloproteinase brevilysin H6, but does not inhibit the metalloproteinases thermolysin, HR1A and HR1B. The sequence is that of Small serum protein 3 from Protobothrops flavoviridis (Habu).